Consider the following 412-residue polypeptide: Burnettramic acids biosynthesis cluster protein E (412 aa).

Disordered regions lie at residues 1–66, 308–342, and 386–412; these read MAIA…KKIR, RNPT…SLAT, and SRAE…AAKG. Acidic residues predominate over residues 36-58; that stretch reads EDEQWALDELQDELCQEEPSDSE. The segment covering 395 to 404 has biased composition (polar residues); the sequence is EATTEPSVQS.

It functions in the pathway mycotoxin biosynthesis. In terms of biological role, part of the gene cluster that mediates the biosynthesis of burnettramic acids, an unusual class of bolaamphiphilic pyrrolizidinediones that display potent antibacterial, antifungal, and cytotoxic activities. The first step of the biosynthesis of burnettramic acids is the hydroxylation of proline by the proline hydroxylase buaE to generate 4-hydroxyproline. The PKS-NRPS buaA and trans-enoyl reductase buaC construct the highly reduced polyketide chain, and the condensation (C) domain of buaA then catalyzes the amide bond formation with the activated 4-hydroxyproline. This is followed by the R domain releasing the nascent polyketide-peptide directly via a Dieckmann condensation to afford a tetramic acid fused to the hydroxyproline, generating the bicyclic pyrrolidinedione moiety. The cytochrome P450 monooxygenases buaD and buaG are likely responsible for the multiple hydroxylations on the polyketide chain and its terminus, although in the heterologous context, buaD does not appear to be required. Therefore, while buaG may be a multifunctional cytochrome P450 monooxygenase, it cannot be ruled out that the two secondary alcohols on the polyketide chain could have an acetate origin. Finally, the glycosyltransferase buaB transfers beta-D-mannose to the aglycone burnettramic acid A to form burnettramic acid A. Burnettramic acid B is a minor cis-pyrrolizidine epimer of burnettramic acid A and it is likely that small amounts of it form naturally in acidic environments. The role of the uncharacterized protein buaF in the biosynthesis of burnettramic acids has still to be determined. This Petromyces alliaceus (Aspergillus alliaceus) protein is Burnettramic acids biosynthesis cluster protein E.